We begin with the raw amino-acid sequence, 201 residues long: MEYLIGIQGPDYVLVASDRVAASNIVQMKDDHDKMFKMSEKILLLCVGEAGDTVQFAEYIQKNVQLYKMRNGYELSPTAAANFTRRNLADYLRSRTPYHVNLLLAGYDEHEGPALYYMDYLAALAKAPFAAHGYGAFLTLSILDRYYTPTISREKAVELLRKCLEELQKRFILNLPTFSVRIIDRNGIHDLDNISFPKQGS.

M1 bears the N-acetylmethionine mark.

The protein belongs to the peptidase T1B family. As to quaternary structure, the 26S proteasome consists of a 20S proteasome core and two 19S regulatory subunits. The 20S proteasome core is a barrel-shaped complex made of 28 subunits that are arranged in four stacked rings. The two outer rings are each formed by seven alpha subunits, and the two inner rings are formed by seven beta subunits. The proteolytic activity is exerted by three beta-subunits PSMB5, PSMB6 and PSMB7.

The protein localises to the cytoplasm. Its subcellular location is the nucleus. Functionally, non-catalytic component of the 20S core proteasome complex involved in the proteolytic degradation of most intracellular proteins. This complex plays numerous essential roles within the cell by associating with different regulatory particles. Associated with two 19S regulatory particles, forms the 26S proteasome and thus participates in the ATP-dependent degradation of ubiquitinated proteins. The 26S proteasome plays a key role in the maintenance of protein homeostasis by removing misfolded or damaged proteins that could impair cellular functions, and by removing proteins whose functions are no longer required. Associated with the PA200 or PA28, the 20S proteasome mediates ubiquitin-independent protein degradation. This type of proteolysis is required in several pathways including spermatogenesis (20S-PA200 complex) or generation of a subset of MHC class I-presented antigenic peptides (20S-PA28 complex). The protein is Proteasome subunit beta type-2 (PSMB2) of Bos taurus (Bovine).